A 237-amino-acid polypeptide reads, in one-letter code: Zinc finger protein 22 (237 aa).

Residues 1–33 (MRLGKPKGGISRSASQGKTYESKRKTARQRQKW) are disordered. 2 positions are modified to N6-acetyllysine: Lys18 and Lys23. C2H2-type zinc fingers lie at residues 55–82 (YKCT…GKKS), 83–110 (HKCA…GEKP), 111–138 (YKCD…GEKP), 139–166 (YCCD…GEKP), and 167–194 (YQCE…EKKS). The span at 188 to 217 (VHKEKKSHKRGKNARAKTHPVSWKRGKGRK) shows a compositional bias: basic residues. The segment at 188–218 (VHKEKKSHKRGKNARAKTHPVSWKRGKGRKA) is disordered.

Belongs to the krueppel C2H2-type zinc-finger protein family. As to expression, highly expressed in the ameloblast layer of mandibular incisors, moderately expressed in submandibular gland, calvaria, kidney and lung, and expressed at low levels in brain and thymus.

It is found in the nucleus. Functionally, binds DNA through the consensus sequence 5'-CAATG-3'. May be involved in transcriptional regulation and may play a role in tooth formation. This is Zinc finger protein 22 (Znf22) from Rattus norvegicus (Rat).